The following is a 231-amino-acid chain: uncharacterized protein (231 aa).

Helical transmembrane passes span Phe39 to Phe59, Ala70 to Ile90, Ala156 to Ile176, and Ile189 to Phe206.

It belongs to the FliR/MopE/SpaR family.

The protein localises to the cell membrane. This is an uncharacterized protein from Escherichia coli (strain K12).